The chain runs to 412 residues: Putative competence-damage inducible protein (412 aa).

Belongs to the CinA family.

The sequence is that of Putative competence-damage inducible protein from Bacillus cereus (strain Q1).